Reading from the N-terminus, the 274-residue chain is Light-independent protochlorophyllide reductase iron-sulfur ATP-binding protein (274 aa).

ATP-binding positions include 12-17 (GIGKST) and K41. Residue S16 coordinates Mg(2+). Residues C97 and C131 each contribute to the [4Fe-4S] cluster site.

This sequence belongs to the NifH/BchL/ChlL family. In terms of assembly, homodimer. Protochlorophyllide reductase is composed of three subunits; BchL, BchN and BchB. [4Fe-4S] cluster serves as cofactor.

It catalyses the reaction chlorophyllide a + oxidized 2[4Fe-4S]-[ferredoxin] + 2 ADP + 2 phosphate = protochlorophyllide a + reduced 2[4Fe-4S]-[ferredoxin] + 2 ATP + 2 H2O. The protein operates within porphyrin-containing compound metabolism; bacteriochlorophyll biosynthesis (light-independent). Its function is as follows. Component of the dark-operative protochlorophyllide reductase (DPOR) that uses Mg-ATP and reduced ferredoxin to reduce ring D of protochlorophyllide (Pchlide) to form chlorophyllide a (Chlide). This reaction is light-independent. The L component serves as a unique electron donor to the NB-component of the complex, and binds Mg-ATP. The chain is Light-independent protochlorophyllide reductase iron-sulfur ATP-binding protein from Chloroherpeton thalassium (strain ATCC 35110 / GB-78).